Reading from the N-terminus, the 197-residue chain is Protein GrpE (197 aa).

Positions 1–40 (MSSKEQKTPEGQAPEEIIMDQHEEIEAVEPEASAEQVDPR) are disordered.

This sequence belongs to the GrpE family. In terms of assembly, homodimer.

Its subcellular location is the cytoplasm. Functionally, participates actively in the response to hyperosmotic and heat shock by preventing the aggregation of stress-denatured proteins, in association with DnaK and GrpE. It is the nucleotide exchange factor for DnaK and may function as a thermosensor. Unfolded proteins bind initially to DnaJ; upon interaction with the DnaJ-bound protein, DnaK hydrolyzes its bound ATP, resulting in the formation of a stable complex. GrpE releases ADP from DnaK; ATP binding to DnaK triggers the release of the substrate protein, thus completing the reaction cycle. Several rounds of ATP-dependent interactions between DnaJ, DnaK and GrpE are required for fully efficient folding. This chain is Protein GrpE, found in Escherichia coli (strain K12 / DH10B).